Consider the following 210-residue polypeptide: ATP-dependent Clp protease proteolytic subunit (210 aa).

S106 serves as the catalytic Nucleophile. H131 is an active-site residue.

It belongs to the peptidase S14 family. Fourteen ClpP subunits assemble into 2 heptameric rings which stack back to back to give a disk-like structure with a central cavity, resembling the structure of eukaryotic proteasomes.

It is found in the cytoplasm. The catalysed reaction is Hydrolysis of proteins to small peptides in the presence of ATP and magnesium. alpha-casein is the usual test substrate. In the absence of ATP, only oligopeptides shorter than five residues are hydrolyzed (such as succinyl-Leu-Tyr-|-NHMec, and Leu-Tyr-Leu-|-Tyr-Trp, in which cleavage of the -Tyr-|-Leu- and -Tyr-|-Trp bonds also occurs).. Its function is as follows. Cleaves peptides in various proteins in a process that requires ATP hydrolysis. Has a chymotrypsin-like activity. Plays a major role in the degradation of misfolded proteins. In Bartonella tribocorum (strain CIP 105476 / IBS 506), this protein is ATP-dependent Clp protease proteolytic subunit.